A 175-amino-acid polypeptide reads, in one-letter code: Ribosome maturation factor RimM (175 aa).

The PRC barrel domain maps to Pro96 to Leu172.

The protein belongs to the RimM family. Binds ribosomal protein uS19.

The protein resides in the cytoplasm. An accessory protein needed during the final step in the assembly of 30S ribosomal subunit, possibly for assembly of the head region. Essential for efficient processing of 16S rRNA. May be needed both before and after RbfA during the maturation of 16S rRNA. It has affinity for free ribosomal 30S subunits but not for 70S ribosomes. This Mycolicibacterium paratuberculosis (strain ATCC BAA-968 / K-10) (Mycobacterium paratuberculosis) protein is Ribosome maturation factor RimM.